Reading from the N-terminus, the 88-residue chain is Small ribosomal subunit protein bS16 (88 aa).

Belongs to the bacterial ribosomal protein bS16 family.

The sequence is that of Small ribosomal subunit protein bS16 from Geobacter metallireducens (strain ATCC 53774 / DSM 7210 / GS-15).